A 242-amino-acid polypeptide reads, in one-letter code: Cysteine desulfuration protein SufE (242 aa).

Residue cysteine 148 is the Cysteine persulfide intermediate of the active site.

Belongs to the SufE family. Monomer. Interacts with SufS; interaction enhances cysteine desulfurase activity of SufS.

The protein localises to the plastid. Its subcellular location is the apicoplast. Its pathway is cofactor biosynthesis; iron-sulfur cluster biosynthesis. In terms of biological role, participates in sulfur mobilization (SUF) pathway for iron-sulfur (Fe-S) cluster biogenesis. Enhances cysteine desulfurase activity of SufS. Probably functions as a sulfur acceptor for SufS. This chain is Cysteine desulfuration protein SufE, found in Plasmodium vivax.